An 80-amino-acid chain; its full sequence is Large ribosomal subunit protein bL31B (80 aa).

It belongs to the bacterial ribosomal protein bL31 family. Type B subfamily. In terms of assembly, part of the 50S ribosomal subunit.

In Streptococcus pneumoniae serotype 2 (strain D39 / NCTC 7466), this protein is Large ribosomal subunit protein bL31B.